The sequence spans 474 residues: L-arabinose isomerase 2 (474 aa).

Residues Glu-306, Glu-331, His-348, and His-447 each coordinate Mn(2+).

This sequence belongs to the arabinose isomerase family. The cofactor is Mn(2+).

The enzyme catalyses beta-L-arabinopyranose = L-ribulose. The protein operates within carbohydrate degradation; L-arabinose degradation via L-ribulose; D-xylulose 5-phosphate from L-arabinose (bacterial route): step 1/3. Catalyzes the conversion of L-arabinose to L-ribulose. This is L-arabinose isomerase 2 from Bacillus licheniformis (strain ATCC 14580 / DSM 13 / JCM 2505 / CCUG 7422 / NBRC 12200 / NCIMB 9375 / NCTC 10341 / NRRL NRS-1264 / Gibson 46).